Reading from the N-terminus, the 266-residue chain is Tryptophan synthase alpha chain (266 aa).

Residues Glu49 and Asp60 each act as proton acceptor in the active site.

The protein belongs to the TrpA family. Tetramer of two alpha and two beta chains.

It catalyses the reaction (1S,2R)-1-C-(indol-3-yl)glycerol 3-phosphate + L-serine = D-glyceraldehyde 3-phosphate + L-tryptophan + H2O. It participates in amino-acid biosynthesis; L-tryptophan biosynthesis; L-tryptophan from chorismate: step 5/5. In terms of biological role, the alpha subunit is responsible for the aldol cleavage of indoleglycerol phosphate to indole and glyceraldehyde 3-phosphate. The polypeptide is Tryptophan synthase alpha chain (Chloroflexus aurantiacus (strain ATCC 29364 / DSM 637 / Y-400-fl)).